The chain runs to 142 residues: Transcription antitermination protein NusB (142 aa).

It belongs to the NusB family.

Involved in transcription antitermination. Required for transcription of ribosomal RNA (rRNA) genes. Binds specifically to the boxA antiterminator sequence of the ribosomal RNA (rrn) operons. In Streptococcus uberis (strain ATCC BAA-854 / 0140J), this protein is Transcription antitermination protein NusB.